Reading from the N-terminus, the 215-residue chain is Sodium channel regulatory subunit beta-3 (215 aa).

The N-terminal stretch at 1–22 is a signal peptide; the sequence is MPAFNRLFPLASLVLIYWVSVC. At 23 to 156 the chain is on the extracellular side; it reads FPVCVEVPSE…EEAGEDFTSV (134 aa). Intrachain disulfides connect Cys26–Cys48 and Cys45–Cys120. Residues 32 to 154 enclose the Ig-like C2-type domain; it reads ETEAVQGNPM…VTEEAGEDFT (123 aa). N-linked (GlcNAc...) asparagine glycans are attached at residues Asn95, Asn109, Asn113, and Asn121. A helical membrane pass occupies residues 157–178; sequence VSEIMMYILLVFLTLWLLIEMI. Residues 179-215 lie on the Cytoplasmic side of the membrane; the sequence is YCYRKVSKAEEAAQENASDYLAIPSENKENSAVPVEE.

It belongs to the sodium channel auxiliary subunit SCN3B (TC 8.A.17) family. A voltage-gated sodium (Nav) channel consists of an ion-conducting pore-forming alpha subunit functional on its own that is regulated by one or more beta subunits. Forms homodimers and homotrimers. SCN3B is non-covalently associated with alpha subunits and induces the formation of alpha subunit oligomers, including trimers. Interacts with SCN5A/Nav1.5; regulatory subunit of SCN5A/Nav1.5. Interacts with SCN7A/Nav2.1; probable regulatory subunit of SCN7A/Nav2.1. Interacts with SCN10A; regulatory subunit of SCN10A/Nav1.8. Interacts with NFASC; probably involved in targeting the sodium channels to the nodes of Ranvier. Intramolecular disulfide bonds favor the voltage-gated sodium channel oligomeric complex assembly. Post-translationally, N-glycosylated. Expressed in the atrium.

It is found in the cell membrane. Functionally, regulatory subunit of multiple voltage-gated sodium (Nav) channels directly mediating the depolarization of excitable membranes. Navs, also called VGSCs (voltage-gated sodium channels) or VDSCs (voltage-dependent sodium channels), operate by switching between closed and open conformations depending on the voltage difference across the membrane. In the open conformation they allow Na(+) ions to selectively pass through the pore, along their electrochemical gradient. The influx of Na+ ions provokes membrane depolarization, initiating the propagation of electrical signals throughout cells and tissues. The accessory beta subunits participate in localization and functional modulation of the Nav channels. Modulates the activity of SCN2A/Nav1.2, causing a hyperpolarizing shift in the voltage-dependence of inactivation of the channel and increasing the fraction of channels operating in the fast gating mode. Modulates the activity of SCN5A/Nav1.5. Could also regulate the atypical sodium channel SCN7A/Nav2.1. Modulates the activity of SCN10A/Nav1.8, regulating its oligomerization and accelerating the recovery from inactivation. In Homo sapiens (Human), this protein is Sodium channel regulatory subunit beta-3.